The following is a 525-amino-acid chain: NADH-quinone oxidoreductase subunit N (525 aa).

The next 14 helical transmembrane spans lie at 26-46 (LSPM…DAFA), 53-73 (VLQP…VVLL), 90-110 (PTLF…LLVA), 143-163 (VQTE…LFVA), 167-187 (LLVM…LCGL), 202-222 (YFLL…FAYG), 246-266 (LYLS…AAPF), 278-298 (PTPI…GALL), 314-334 (PVIW…ALTQ), 341-361 (LAYS…GSNI), 368-388 (MFYL…VSLV), 411-431 (LAGT…TSGF), 449-469 (LVVV…RVIV), and 487-507 (PTLT…LGVA).

This sequence belongs to the complex I subunit 2 family. As to quaternary structure, NDH-1 is composed of 14 different subunits. Subunits NuoA, H, J, K, L, M, N constitute the membrane sector of the complex.

It is found in the cell membrane. The enzyme catalyses a quinone + NADH + 5 H(+)(in) = a quinol + NAD(+) + 4 H(+)(out). In terms of biological role, NDH-1 shuttles electrons from NADH, via FMN and iron-sulfur (Fe-S) centers, to quinones in the respiratory chain. The immediate electron acceptor for the enzyme in this species is believed to be a menaquinone. Couples the redox reaction to proton translocation (for every two electrons transferred, four hydrogen ions are translocated across the cytoplasmic membrane), and thus conserves the redox energy in a proton gradient. This Parafrankia sp. (strain EAN1pec) protein is NADH-quinone oxidoreductase subunit N.